The following is a 130-amino-acid chain: Con-Ins G2 (130 aa).

A signal peptide spans 1–24; it reads MTTSSYFLLVALGLLLYVRQSFST. 4 cysteine pairs are disulfide-bonded: Cys29-Cys100, Cys41-Cys103, Cys53-Cys116, and Cys102-Cys107. Pro34 bears the 4-hydroxyproline; partial mark. The segment at 54-74 is disordered; that stretch reads EEEEARRGGTNDGGKKRRRAS. The propeptide at 59 to 92 is c peptide; sequence RRGGTNDGGKKRRRASPLWKRRRFLSMLKARAKR. 4-carboxyglutamate; partial is present on Glu111.

This sequence belongs to the insulin family. In terms of assembly, heterodimer of A and B chains; disulfide-linked. As to expression, expressed by the venom gland.

It is found in the secreted. This venom insulin, from a fish-hunting cone snail, facilitates prey capture by rapidly inducing hypoglycemic shock. Intraperitoneal injection of this peptide into zebrafish lowers blood glucose with the same potency than human insulin. In vivo, when applied to water, this peptide reduces overall locomotor activity of zebrafish larvae, observed as a significant decrease in the percentage of time spent swimming and movement frequency. The sequence is that of Con-Ins G2 from Conus geographus (Geography cone).